A 376-amino-acid polypeptide reads, in one-letter code: Carbamoyl phosphate synthase small chain (376 aa).

A CPSase region spans residues 1 to 187; that stretch reads MKALLALEDG…KEDGSFLWKQ (187 aa). Residues Ser-45, Gly-239, and Gly-241 each coordinate L-glutamine. In terms of domain architecture, Glutamine amidotransferase type-1 spans 189-376; that stretch reads KIPLIVYDYG…KEVVLLKLGC (188 aa). Cys-266 serves as the catalytic Nucleophile. Residues Leu-267, Gln-270, Asn-308, Gly-310, and Phe-311 each contribute to the L-glutamine site. Residues His-349 and Glu-351 contribute to the active site.

The protein belongs to the CarA family. In terms of assembly, composed of two chains; the small (or glutamine) chain promotes the hydrolysis of glutamine to ammonia, which is used by the large (or ammonia) chain to synthesize carbamoyl phosphate. Tetramer of heterodimers (alpha,beta)4.

The enzyme catalyses hydrogencarbonate + L-glutamine + 2 ATP + H2O = carbamoyl phosphate + L-glutamate + 2 ADP + phosphate + 2 H(+). It carries out the reaction L-glutamine + H2O = L-glutamate + NH4(+). It participates in amino-acid biosynthesis; L-arginine biosynthesis; carbamoyl phosphate from bicarbonate: step 1/1. Its pathway is pyrimidine metabolism; UMP biosynthesis via de novo pathway; (S)-dihydroorotate from bicarbonate: step 1/3. Its function is as follows. Small subunit of the glutamine-dependent carbamoyl phosphate synthetase (CPSase). CPSase catalyzes the formation of carbamoyl phosphate from the ammonia moiety of glutamine, carbonate, and phosphate donated by ATP, constituting the first step of 2 biosynthetic pathways, one leading to arginine and/or urea and the other to pyrimidine nucleotides. The small subunit (glutamine amidotransferase) binds and cleaves glutamine to supply the large subunit with the substrate ammonia. This chain is Carbamoyl phosphate synthase small chain, found in Lawsonia intracellularis (strain PHE/MN1-00).